Consider the following 385-residue polypeptide: Homoserine O-succinyltransferase (385 aa).

An AB hydrolase-1 domain is found at 45-355; the sequence is NAVLVCHALN…PHGHDAFLLD (311 aa). Ser-151 acts as the Nucleophile in catalysis. Residue Arg-221 coordinates substrate. Catalysis depends on residues Asp-316 and His-349. Asp-350 provides a ligand contact to substrate.

The protein belongs to the AB hydrolase superfamily. MetX family. Homodimer.

It is found in the cytoplasm. The enzyme catalyses L-homoserine + succinyl-CoA = O-succinyl-L-homoserine + CoA. It functions in the pathway amino-acid biosynthesis; L-methionine biosynthesis via de novo pathway; O-succinyl-L-homoserine from L-homoserine: step 1/1. Its function is as follows. Transfers a succinyl group from succinyl-CoA to L-homoserine, forming succinyl-L-homoserine. The protein is Homoserine O-succinyltransferase of Janthinobacterium sp. (strain Marseille) (Minibacterium massiliensis).